The sequence spans 483 residues: MLNASLKQLSAMLAARKISSVELTSEFLKRSRALNPEYNAFITLDERTSLAQAQAADILIGSGRGQPLTGVPIAQKDIFCTKGWLTTCGSKMLSNFISPYDAHVIGRFNAVGAVNIGKTNMDEFAMGSSNETSFYGPVKNPWDTAAVPGGSSGGSACAVAARMAPAATGTDTGGSIRQPAALCGISGLKPTYGLVSRYGMIAFASSLDQGGPMAKSAEDLGLMLNVMAGFDARDSTSLEREPEDYTRDLEKPLDGLRIGLPKEYFVKEIAEDVARAVEAAIGQYRKLGAETVEVSLPNTKLSVPVYYVLAPAEASSNLSRFDGVRYGYRAPDYLDLNDMYRKTRAQGFGSEVKRRILIGTYVLSHGYYDAYYIQAQKLRRLMAQDFAEAFKECDIIMGPTSPTVAFDLGERSSDPVQMYLSDAYTIAVNLAGLPAMSIPVGFGHKNRPVGLHIIGNYFAEAQMLNVAHQYQLESDWHTRMPKE.

Residues K76 and S151 each act as charge relay system in the active site. The active-site Acyl-ester intermediate is S175.

It belongs to the amidase family. GatA subfamily. As to quaternary structure, heterotrimer of A, B and C subunits.

The enzyme catalyses L-glutamyl-tRNA(Gln) + L-glutamine + ATP + H2O = L-glutaminyl-tRNA(Gln) + L-glutamate + ADP + phosphate + H(+). Allows the formation of correctly charged Gln-tRNA(Gln) through the transamidation of misacylated Glu-tRNA(Gln) in organisms which lack glutaminyl-tRNA synthetase. The reaction takes place in the presence of glutamine and ATP through an activated gamma-phospho-Glu-tRNA(Gln). This is Glutamyl-tRNA(Gln) amidotransferase subunit A from Nitrosospira multiformis (strain ATCC 25196 / NCIMB 11849 / C 71).